A 245-amino-acid chain; its full sequence is RAD51-like protein 1 (245 aa).

Interacts with brc-2 and rad-51.

It is found in the nucleus. Has a role in the homologous recombination repair (HRR) of genomic DNA during meiosis. Required for rad-51 recruitment onto ssDNA gaps generated at stalled replication fork barriers. This is RAD51-like protein 1 (rfs-1) from Caenorhabditis elegans.